We begin with the raw amino-acid sequence, 401 residues long: Anhydro-N-acetylmuramic acid kinase (401 aa).

Residue 25–32 participates in ATP binding; sequence GTSLDGLD.

Belongs to the anhydro-N-acetylmuramic acid kinase family.

The catalysed reaction is 1,6-anhydro-N-acetyl-beta-muramate + ATP + H2O = N-acetyl-D-muramate 6-phosphate + ADP + H(+). It participates in amino-sugar metabolism; 1,6-anhydro-N-acetylmuramate degradation. The protein operates within cell wall biogenesis; peptidoglycan recycling. Catalyzes the specific phosphorylation of 1,6-anhydro-N-acetylmuramic acid (anhMurNAc) with the simultaneous cleavage of the 1,6-anhydro ring, generating MurNAc-6-P. Is required for the utilization of anhMurNAc either imported from the medium or derived from its own cell wall murein, and thus plays a role in cell wall recycling. The protein is Anhydro-N-acetylmuramic acid kinase of Pseudoalteromonas translucida (strain TAC 125).